The chain runs to 281 residues: CDAN1-interacting nuclease 1 (281 aa).

The protein resides in the nucleus. The protein localises to the cytoplasm. Functionally, plays a role in erythroid cell differentiation. In Bos taurus (Bovine), this protein is CDAN1-interacting nuclease 1 (CDIN1).